The chain runs to 116 residues: Mitochondrial import inner membrane translocase subunit PAM16 like 2 (116 aa).

Residues 1–27 constitute a mitochondrion transit peptide; the sequence is MAGRLLANLIVMGSGIIGRAVFQAYRQ. The tract at residues 57–106 is J-like; that stretch reads EARQILGVTEKTSWEEILQKYDKLFENNAKAGSFYLQSKVHRAKECLEVV.

The protein belongs to the TIM16/PAM16 family. Expressed constitutively and ubiquitously, except in root tips, at low levels.

It localises to the mitochondrion inner membrane. The protein resides in the cytoplasm. In terms of biological role, regulates ATP-dependent protein translocation into the mitochondrial matrix. Involved in the uptake of thaxtomin, a phytotoxin produced by Streptomyces bacteria, that causes dramatic cell swelling, reduced seedling growth, and inhibition of cellulose synthesis. Modulates polar auxin transport. Involved in importing a negative regulator of plant immunity into mitochondria, thus protecting plants from over-accumulation of reactive oxygen species (ROS) and preventing autoimmunity. Confers sensitivity to virulent pathogens such as the oomycete H.arabidopsidis Noco2 and the bacteria P.syringae pv. maculicola ES4326. The sequence is that of Mitochondrial import inner membrane translocase subunit PAM16 like 2 from Arabidopsis thaliana (Mouse-ear cress).